Here is a 337-residue protein sequence, read N- to C-terminus: Adenylosuccinate synthetase (337 aa).

GTP contacts are provided by residues 12–18 (GDEGKGK) and 42–44 (GHT). Aspartate 13 acts as the Proton acceptor in catalysis. Mg(2+) is bound by residues aspartate 13 and glycine 42. Residues 13–16 (DEGK), 40–43 (NAGH), threonine 127, arginine 141, glutamine 179, threonine 194, and arginine 256 each bind IMP. Histidine 43 acts as the Proton donor in catalysis. Residue 252-258 (TVTGRRR) coordinates substrate. Residues arginine 258, 284-286 (CLD), and 324-326 (STG) contribute to the GTP site.

Belongs to the adenylosuccinate synthetase family. As to quaternary structure, homodimer. Mg(2+) is required as a cofactor.

The protein resides in the cytoplasm. The catalysed reaction is IMP + L-aspartate + GTP = N(6)-(1,2-dicarboxyethyl)-AMP + GDP + phosphate + 2 H(+). It functions in the pathway purine metabolism; AMP biosynthesis via de novo pathway; AMP from IMP: step 1/2. Its function is as follows. Plays an important role in the de novo pathway of purine nucleotide biosynthesis. Catalyzes the first committed step in the biosynthesis of AMP from IMP. This Methanococcus maripaludis (strain C6 / ATCC BAA-1332) protein is Adenylosuccinate synthetase.